The following is a 296-amino-acid chain: Sperm-activating peptides (296 aa).

3 consecutive propeptides follow at residues 1 to 134 (MPPG…MYKK), 146 to 190 (MLSN…MILK), and 290 to 296 (EVEIKDW).

Its function is as follows. Causes stimulation of sperm respiration and motility through intracellular alkalinization, transient elevations of cAMP, cGMP and calcium levels in sperm cells, and transient activation and subsequent inactivation of the membrane form of guanylate cyclase. This Strongylocentrotus purpuratus (Purple sea urchin) protein is Sperm-activating peptides.